Here is a 64-residue protein sequence, read N- to C-terminus: Bactridin-2 (64 aa).

Residues 1 to 63 (KDGYLVGNDG…TWNRATNRCG (63 aa)) form the LCN-type CS-alpha/beta domain. 4 cysteine pairs are disulfide-bonded: C11–C62, C15–C37, C23–C43, and C27–C45.

It belongs to the long (4 C-C) scorpion toxin superfamily. Sodium channel inhibitor family. Beta subfamily. Expressed by the venom gland.

Its subcellular location is the secreted. In terms of biological role, shows antibacterial activity against both Gram-positive bacteria (B.subtilis, M.luteus, E.faecalis) and Gram-negative bacteria (P.aeruginosa, Y.enterocolitica, A.calcoaceticus). Modifies membrane sodium permeability on Y.enterocolitica. Is toxic to mice, but is not to crabs. Induces concentration dependent haemolysis in human erythrocytes. Acts by inhibiting the sodium (Nav) currents. This Tityus discrepans (Venezuelan scorpion) protein is Bactridin-2.